Consider the following 282-residue polypeptide: Dihydropteroate synthase (282 aa).

In terms of domain architecture, Pterin-binding spans 15–267; the sequence is PHVMGILNVT…DVKETVEAMR (253 aa). Asn22 contributes to the Mg(2+) binding site. (7,8-dihydropterin-6-yl)methyl diphosphate-binding positions include Thr62, Asp96, Asn115, Asp185, Lys221, and 255–257; that span reads RVH.

Belongs to the DHPS family. As to quaternary structure, homodimer. Mg(2+) is required as a cofactor.

The catalysed reaction is (7,8-dihydropterin-6-yl)methyl diphosphate + 4-aminobenzoate = 7,8-dihydropteroate + diphosphate. It functions in the pathway cofactor biosynthesis; tetrahydrofolate biosynthesis; 7,8-dihydrofolate from 2-amino-4-hydroxy-6-hydroxymethyl-7,8-dihydropteridine diphosphate and 4-aminobenzoate: step 1/2. In terms of biological role, catalyzes the condensation of para-aminobenzoate (pABA) with 6-hydroxymethyl-7,8-dihydropterin diphosphate (DHPt-PP) to form 7,8-dihydropteroate (H2Pte), the immediate precursor of folate derivatives. The protein is Dihydropteroate synthase (folP) of Shigella flexneri.